Here is a 187-residue protein sequence, read N- to C-terminus: Large ribosomal subunit protein uL5 (187 aa).

Belongs to the universal ribosomal protein uL5 family. In terms of assembly, part of the 50S ribosomal subunit; part of the 5S rRNA/L5/L18/L25 subcomplex. Contacts the 5S rRNA and the P site tRNA. Forms a bridge to the 30S subunit in the 70S ribosome.

Its function is as follows. This is one of the proteins that bind and probably mediate the attachment of the 5S RNA into the large ribosomal subunit, where it forms part of the central protuberance. In the 70S ribosome it contacts protein S13 of the 30S subunit (bridge B1b), connecting the 2 subunits; this bridge is implicated in subunit movement. Contacts the P site tRNA; the 5S rRNA and some of its associated proteins might help stabilize positioning of ribosome-bound tRNAs. This Mycobacterium sp. (strain JLS) protein is Large ribosomal subunit protein uL5.